The sequence spans 418 residues: Glutamyl-tRNA reductase (418 aa).

Substrate is bound by residues 49-52 (TCNR), S109, 114-116 (EPQ), and Q120. C50 acts as the Nucleophile in catalysis. NADP(+) is bound at residue 189 to 194 (GAGETI).

This sequence belongs to the glutamyl-tRNA reductase family. Homodimer.

The enzyme catalyses (S)-4-amino-5-oxopentanoate + tRNA(Glu) + NADP(+) = L-glutamyl-tRNA(Glu) + NADPH + H(+). It participates in porphyrin-containing compound metabolism; protoporphyrin-IX biosynthesis; 5-aminolevulinate from L-glutamyl-tRNA(Glu): step 1/2. Catalyzes the NADPH-dependent reduction of glutamyl-tRNA(Glu) to glutamate 1-semialdehyde (GSA). The chain is Glutamyl-tRNA reductase from Salmonella choleraesuis (strain SC-B67).